We begin with the raw amino-acid sequence, 265 residues long: uncharacterized protein (265 aa).

This sequence belongs to the ycf23 family.

It is found in the plastid. The protein localises to the chloroplast. This is an uncharacterized protein from Porphyra purpurea (Red seaweed).